The following is a 219-amino-acid chain: Cytidylate kinase (219 aa).

11–19 (GTAGSGKTA) provides a ligand contact to ATP.

The protein belongs to the cytidylate kinase family. Type 1 subfamily.

The protein resides in the cytoplasm. The enzyme catalyses CMP + ATP = CDP + ADP. It catalyses the reaction dCMP + ATP = dCDP + ADP. This Mesoplasma florum (strain ATCC 33453 / NBRC 100688 / NCTC 11704 / L1) (Acholeplasma florum) protein is Cytidylate kinase.